A 963-amino-acid chain; its full sequence is Phosphoenolpyruvate carboxylase 2 (963 aa).

Residue serine 11 is modified to Phosphoserine. Residues histidine 172 and lysine 599 contribute to the active site. Serine 701 carries the phosphoserine modification.

It belongs to the PEPCase type 1 family. As to quaternary structure, homotetramer. Requires Mg(2+) as cofactor. Expressed in all plant organs, with higher levels in stems and leaves.

It is found in the cytoplasm. It carries out the reaction oxaloacetate + phosphate = phosphoenolpyruvate + hydrogencarbonate. With respect to regulation, by light-reversible phosphorylation. Functionally, through the carboxylation of phosphoenolpyruvate (PEP) it forms oxaloacetate, a four-carbon dicarboxylic acid source for the tricarboxylic acid cycle. The polypeptide is Phosphoenolpyruvate carboxylase 2 (PPC2) (Arabidopsis thaliana (Mouse-ear cress)).